We begin with the raw amino-acid sequence, 200 residues long: Protein RISC-INTERACTING CLEARING 3'-5' EXORIBONUCLEASE 1 (200 aa).

Oligomerization regions lie at residues 35-66 (SKIL…KSEW), 102-127 (KFVT…IVIR), and 166-173 (DSIQSKWD).

This sequence belongs to the RICE family. In terms of assembly, homohexamer with DnaQ-like exonuclease fold in a ring-shaped structure with a central cavity. Component of AGO1 and AGO10-centered RNA-induced silencing complexes (RISC). Interacts with and acts as a cofactor of AGO1 and AGO10. As to expression, ubiquitously expressed throughout development in germinating seeds, cotyledons, leaves and roots of young seedlings and adult plants, stems and inflorescence.

The protein resides in the cytoplasm. It catalyses the reaction Exonucleolytic cleavage in the 3'- to 5'-direction to yield nucleoside 5'-phosphates.. Functionally, 3'-to-5' exoribonuclease (RNase) specifically targeting single-stranded RNAs. Triggers miRNA accumulation in RNA-induced silencing complex (RISC), composed of miRNAs and AGO proteins, by degrading uridylated cleavage fragments. Required during plant growth and development. The sequence is that of Protein RISC-INTERACTING CLEARING 3'-5' EXORIBONUCLEASE 1 from Arabidopsis thaliana (Mouse-ear cress).